The chain runs to 255 residues: Hydroxyacylglutathione hydrolase (255 aa).

Positions 56, 58, 60, 61, 114, 133, and 171 each coordinate Zn(2+).

The protein belongs to the metallo-beta-lactamase superfamily. Glyoxalase II family. In terms of assembly, monomer. Zn(2+) serves as cofactor.

The enzyme catalyses an S-(2-hydroxyacyl)glutathione + H2O = a 2-hydroxy carboxylate + glutathione + H(+). Its pathway is secondary metabolite metabolism; methylglyoxal degradation; (R)-lactate from methylglyoxal: step 2/2. Functionally, thiolesterase that catalyzes the hydrolysis of S-D-lactoyl-glutathione to form glutathione and D-lactic acid. This Cereibacter sphaeroides (strain ATCC 17023 / DSM 158 / JCM 6121 / CCUG 31486 / LMG 2827 / NBRC 12203 / NCIMB 8253 / ATH 2.4.1.) (Rhodobacter sphaeroides) protein is Hydroxyacylglutathione hydrolase.